A 419-amino-acid chain; its full sequence is Protein FAM217A (419 aa).

Disordered stretches follow at residues 1 to 60, 96 to 119, 236 to 299, and 317 to 382; these read MGRK…LENP, KGST…DLSE, SSSK…SRAL, and KNSK…RTKK. Positions 7–19 are enriched in low complexity; sequence ESCSSSLHVSSIS. A compositionally biased stretch (low complexity) spans 236 to 251; it reads SSSKAIATKAKAPKIP. Polar residues-rich tracts occupy residues 252-261 and 271-281; these read ETSTLQTSGV and NSGSGKPEQNV. Low complexity-rich tracts occupy residues 282–296 and 334–345; these read SKWS…KSNS and PTTTTQATQPMA.

It belongs to the FAM217 family.

The chain is Protein FAM217A (Fam217a) from Mus musculus (Mouse).